The sequence spans 62 residues: Metallothionein-like protein 3A (62 aa).

Belongs to the metallothionein superfamily. Type 15 family.

In terms of biological role, metallothioneins have a high content of cysteine residues that bind various heavy metals. The polypeptide is Metallothionein-like protein 3A (MT3A) (Oryza sativa subsp. indica (Rice)).